A 134-amino-acid polypeptide reads, in one-letter code: Nogalonic acid methyl ester cyclase (134 aa).

A nogalaviketone-binding site is contributed by glutamine 95. Catalysis depends on aspartate 111, which acts as the Proton donor/acceptor.

The protein belongs to the polyketide cyclase DnrD family. As to quaternary structure, homotetramer. Dimer of dimers.

It carries out the reaction nogalaviketone = methyl nogalonate. The protein operates within antibiotic biosynthesis. Functionally, involved in the biosynthesis of the aromatic polyketide antibiotic nogalamycin. Catalyzes the formation of nogalaviketone from nogalonic acid methyl ester (NAME), the last ring-closure step in the biosynthesis of nogalamycin. The sequence is that of Nogalonic acid methyl ester cyclase from Streptomyces nogalater.